The sequence spans 496 residues: Probable cytosol aminopeptidase (496 aa).

Residues K262 and D267 each contribute to the Mn(2+) site. K274 is a catalytic residue. The Mn(2+) site is built by D285, D344, and E346. Residue R348 is part of the active site.

This sequence belongs to the peptidase M17 family. Mn(2+) is required as a cofactor.

It is found in the cytoplasm. It catalyses the reaction Release of an N-terminal amino acid, Xaa-|-Yaa-, in which Xaa is preferably Leu, but may be other amino acids including Pro although not Arg or Lys, and Yaa may be Pro. Amino acid amides and methyl esters are also readily hydrolyzed, but rates on arylamides are exceedingly low.. The enzyme catalyses Release of an N-terminal amino acid, preferentially leucine, but not glutamic or aspartic acids.. In terms of biological role, presumably involved in the processing and regular turnover of intracellular proteins. Catalyzes the removal of unsubstituted N-terminal amino acids from various peptides. The sequence is that of Probable cytosol aminopeptidase from Rhizobium johnstonii (strain DSM 114642 / LMG 32736 / 3841) (Rhizobium leguminosarum bv. viciae).